A 201-amino-acid polypeptide reads, in one-letter code: Retinol-binding protein 4 (201 aa).

The signal sequence occupies residues 1–18 (MEWVWALVLLAALGGGSA). Disulfide bonds link Cys-22-Cys-178, Cys-88-Cys-192, and Cys-138-Cys-147. Gln-116 provides a ligand contact to substrate. Arg-139 carries the post-translational modification Omega-N-methylarginine.

It belongs to the calycin superfamily. Lipocalin family. In terms of assembly, interacts with TTR. Interaction with TTR prevents its loss by filtration through the kidney glomeruli. Interacts with STRA6.

It is found in the secreted. In terms of biological role, retinol-binding protein that mediates retinol transport in blood plasma. Delivers retinol from the liver stores to the peripheral tissues. Transfers the bound all-trans retinol to STRA6, that then facilitates retinol transport across the cell membrane. This Mus musculus (Mouse) protein is Retinol-binding protein 4 (Rbp4).